The primary structure comprises 392 residues: LL-diaminopimelate aminotransferase (392 aa).

Residues tyrosine 13 and glycine 38 each coordinate substrate. Pyridoxal 5'-phosphate-binding positions include tyrosine 67, 102 to 103, tyrosine 127, asparagine 177, tyrosine 208, and 236 to 238; these read SK and SCS. Residues lysine 103, tyrosine 127, and asparagine 177 each coordinate substrate. At lysine 239 the chain carries N6-(pyridoxal phosphate)lysine. Arginine 247 lines the pyridoxal 5'-phosphate pocket. Residue arginine 366 participates in substrate binding.

It belongs to the class-I pyridoxal-phosphate-dependent aminotransferase family. LL-diaminopimelate aminotransferase subfamily. In terms of assembly, homodimer. Pyridoxal 5'-phosphate is required as a cofactor.

It carries out the reaction (2S,6S)-2,6-diaminopimelate + 2-oxoglutarate = (S)-2,3,4,5-tetrahydrodipicolinate + L-glutamate + H2O + H(+). Its pathway is amino-acid biosynthesis; L-lysine biosynthesis via DAP pathway; LL-2,6-diaminopimelate from (S)-tetrahydrodipicolinate (aminotransferase route): step 1/1. Functionally, involved in the synthesis of meso-diaminopimelate (m-DAP or DL-DAP), required for both lysine and peptidoglycan biosynthesis. Catalyzes the direct conversion of tetrahydrodipicolinate to LL-diaminopimelate. Can also use m-DAP instead of LL-DAP as the amino-group donor. This Gloeobacter violaceus (strain ATCC 29082 / PCC 7421) protein is LL-diaminopimelate aminotransferase.